The sequence spans 581 residues: Membrane protein insertase YidC (581 aa).

The chain crosses the membrane as a helical span at residues 7–27 (ILIVALAVVSYLMVLQWNEDY). Positions 41-62 (AATPALPDTPADTASTGGDDIP) are disordered. The next 5 membrane-spanning stretches (helical) occupy residues 365–385 (TVDY…LEVI), 388–408 (LLGN…LIFF), 458–478 (LGGC…YWVL), 489–509 (WMFW…PIIM), and 536–556 (PIIF…YWVV).

This sequence belongs to the OXA1/ALB3/YidC family. Type 1 subfamily. Interacts with the Sec translocase complex via SecD. Specifically interacts with transmembrane segments of nascent integral membrane proteins during membrane integration.

It is found in the cell inner membrane. Functionally, required for the insertion and/or proper folding and/or complex formation of integral membrane proteins into the membrane. Involved in integration of membrane proteins that insert both dependently and independently of the Sec translocase complex, as well as at least some lipoproteins. Aids folding of multispanning membrane proteins. This Ectopseudomonas mendocina (strain ymp) (Pseudomonas mendocina) protein is Membrane protein insertase YidC.